Reading from the N-terminus, the 181-residue chain is Protein canopy homolog 1 (181 aa).

An N-terminal signal peptide occupies residues 1–21 (MAILLHFGVLITAFLSSHVEG). Residues 25–177 (PILYCGACRA…EETGLCKEYL (153 aa)) form the Saposin B-type domain. Intrachain disulfides connect C29–C173, C32–C166, and C87–C139. Residues 178–181 (HNEL) carry the Prevents secretion from ER motif.

It belongs to the canopy family.

It localises to the endoplasmic reticulum. In terms of biological role, plays an role in early embryonic development. The sequence is that of Protein canopy homolog 1 (cnpy1) from Xenopus laevis (African clawed frog).